A 166-amino-acid chain; its full sequence is Monodehydroascorbate reductase, fruit isozyme (166 aa).

This sequence belongs to the FAD-dependent oxidoreductase family. The cofactor is FAD. The N-terminus is blocked.

It catalyses the reaction 2 monodehydro-L-ascorbate radical + NADH + H(+) = 2 L-ascorbate + NAD(+). Functionally, catalyzes the conversion of monodehydroascorbate to ascorbate, oxidizing NADH in the process. In Cucumis sativus (Cucumber), this protein is Monodehydroascorbate reductase, fruit isozyme.